Consider the following 375-residue polypeptide: Fructose-1,6-bisphosphate aldolase/phosphatase (375 aa).

The active-site Proton acceptor; for FBP phosphatase activity is Asp-15. Positions 15, 22, 56, and 57 each coordinate Mg(2+). Position 22 (His-22) interacts with beta-D-fructose 1,6-bisphosphate. Dihydroxyacetone phosphate is bound at residue His-22. Tyr-94 provides a ligand contact to beta-D-fructose 1,6-bisphosphate. Residue Gln-98 coordinates Mg(2+). 107-108 (GN) is a beta-D-fructose 1,6-bisphosphate binding site. Asp-135 provides a ligand contact to Mg(2+). Lys-136 provides a ligand contact to beta-D-fructose 1,6-bisphosphate. Residue Lys-136 participates in dihydroxyacetone phosphate binding. Catalysis depends on Tyr-237, which acts as the Proton donor/acceptor; for FBP aldolase activity. Residues Lys-240, Asp-241, and Asp-242 each contribute to the Mg(2+) site. Lys-240 functions as the Schiff-base intermediate with DHAP; for FBP aldolase activity in the catalytic mechanism. Beta-D-fructose 1,6-bisphosphate is bound by residues 250 to 251 (QS), Arg-274, Asp-295, and Tyr-357. 2 residues coordinate dihydroxyacetone phosphate: Arg-274 and Asp-295.

The protein belongs to the FBP aldolase/phosphatase family. As to quaternary structure, homooctamer; dimer of tetramers. Requires Mg(2+) as cofactor.

It catalyses the reaction beta-D-fructose 1,6-bisphosphate + H2O = beta-D-fructose 6-phosphate + phosphate. It carries out the reaction beta-D-fructose 1,6-bisphosphate = D-glyceraldehyde 3-phosphate + dihydroxyacetone phosphate. It functions in the pathway carbohydrate biosynthesis; gluconeogenesis. Activity is enhanced by dithioerythritol, and is slightly inhibited by fructose 2,6-bisphosphate. AMP does not inhibit the enzyme activity. Catalyzes two subsequent steps in gluconeogenesis: the aldol condensation of dihydroxyacetone phosphate (DHAP) and glyceraldehyde-3-phosphate (GA3P) to fructose-1,6-bisphosphate (FBP), and the dephosphorylation of FBP to fructose-6-phosphate (F6P). Does not display hydrolase activity against fructose 2,6-bisphosphate, fructose 6-phosphate, fructose 1-phosphate, glucose 6-phosphate, and glucose 1-phosphate. Exhibits only negligible activity on inositol-1-phosphate (IMP). Is essential for the growth of T.kodakaraensis under gluconeogenic conditions. This Thermococcus kodakarensis (strain ATCC BAA-918 / JCM 12380 / KOD1) (Pyrococcus kodakaraensis (strain KOD1)) protein is Fructose-1,6-bisphosphate aldolase/phosphatase.